The following is a 1162-amino-acid chain: Leptin receptor (1162 aa).

Positions 1–21 are cleaved as a signal peptide; it reads MMCQKFYVVLLHWEFLYVIAA. Residues 22 to 839 lie on the Extracellular side of the membrane; that stretch reads LNLAYPISPW…AIDKQQNDAG (818 aa). 5 disulfide bridges follow: C37–C90, C89–C99, C131–C142, C186–C195, and C188–C193. Residues N41, N56, N73, and N98 are each glycosylated (N-linked (GlcNAc...) asparagine). A glycan (N-linked (GlcNAc...) asparagine) is linked at N187. Residues 238 to 331 enclose the Fibronectin type-III 1 domain; that stretch reads PPLGLHMEVT…SPQVFTTQDV (94 aa). Residues N275 and N345 are each glycosylated (N-linked (GlcNAc...) asparagine). One can recognise an Ig-like domain in the interval 329-427; it reads QDVVYFPPKI…HRYAELYVID (99 aa). Intrachain disulfides connect C350–C410 and C411–C416. N431 carries N-linked (GlcNAc...) asparagine glycosylation. Intrachain disulfides connect C434-C445, C471-C526, and C486-C496. The leptin-binding stretch occupies residues 465 to 482; that stretch reads HRRSLYCPDSPSIHPTSE. N514, N622, N657, N668, N686, N695, N698, and N726 each carry an N-linked (GlcNAc...) asparagine glycan. Fibronectin type-III domains lie at 537–632, 637–729, and 738–832; these read PPSN…TLVM, PMRG…NLTF, and AVES…DAID. A WSXWS motif motif is present at residues 620 to 624; that stretch reads WSNWS. Residues 840-860 form a helical membrane-spanning segment; sequence LYVIVPIIISSCVLLLGTLLI. Topologically, residues 861–1162 are cytoplasmic; sequence SHQRMKKLFW…MENKMCDLTV (302 aa). Positions 869-877 match the Box 1 motif motif; the sequence is FWDDVPNPK. Position 880 is a phosphoserine (S880). Positions 891-896 are required for JAK2 activation; the sequence is ETFEHL. The required for STAT3 phosphorylation stretch occupies residues 896–904; sequence LFTKHAESV. Y985 carries the phosphotyrosine; by JAK2 modification. Y1077 carries the phosphotyrosine modification. Y1138 is subject to Phosphotyrosine; by JAK2.

The protein belongs to the type I cytokine receptor family. Type 2 subfamily. As to quaternary structure, present as a mixture of monomers and dimers. The phosphorylated receptor binds a number of SH2 domain-containing proteins such as JAK2, STAT3, PTPN11, and SOCS3. Interaction with SOCS3 inhibits JAK/STAT signaling and MAPK cascade. Post-translationally, on ligand binding, phosphorylated on two conserved C-terminal tyrosine residues (isoform B only) by JAK2. Tyr-985 is required for complete binding and activation of PTPN11, ERK/FOS activation,for interaction with SOCS3 and SOCS3 mediated inhibition of leptin signaling. Phosphorylation on Tyr-1138 is required for STAT3 binding/activation. Phosphorylation of Tyr-1077 has a more accessory role. Isoform A: highest level of expression in lung and kidney, also present in heart, brain, spleen, liver, muscle, choroid plexus and hypothalamus. Isoform B: highest levels of expression in hypothalamus and lower levels in brain, testes and adipose tissue. Expressed by neurons of the parabrachial nucleus. Expressed by peripheral blood mononuclear cells and CD4(+) T-cells. Isoform E: expressed in adipose tissue, liver, hypothalamus, cerebral microvessels, heart, and testes.

The protein resides in the cell membrane. It is found in the basolateral cell membrane. The protein localises to the secreted. Receptor for hormone LEP/leptin. On ligand binding, mediates LEP central and peripheral effects through the activation of different signaling pathways such as JAK2/STAT3 and MAPK cascade/FOS. In the hypothalamus, LEP acts as an appetite-regulating factor that induces a decrease in food intake and an increase in energy consumption by inducing anorexinogenic factors and suppressing orexigenic neuropeptides, also regulates bone mass and secretion of hypothalamo-pituitary-adrenal hormones. In the periphery, increases basal metabolism, influences reproductive function, regulates pancreatic beta-cell function and insulin secretion, is pro-angiogenic and affects innate and adaptive immunity. Control of energy homeostasis and melanocortin production (stimulation of POMC and full repression of AgRP transcription) is mediated by STAT3 signaling, whereas distinct signals regulate NPY and the control of fertility, growth and glucose homeostasis. Involved in the regulation of counter-regulatory response to hypoglycemia by inhibiting neurons of the parabrachial nucleus. Has a specific effect on T lymphocyte responses, differentially regulating the proliferation of naive and memory T-cells. Leptin increases Th1 and suppresses Th2 cytokine production. Its function is as follows. May transport LEP across the blood-brain barrier. Binds LEP and mediates LEP endocytosis. Does not induce phosphorylation of and activate STAT3. Functionally, antagonizes Isoform A and isoform B-mediated LEP binding and endocytosis. The polypeptide is Leptin receptor (Lepr) (Mus musculus (Mouse)).